Reading from the N-terminus, the 212-residue chain is Thymidylate kinase (212 aa).

An ATP-binding site is contributed by Gly13–Ser20.

The protein belongs to the thymidylate kinase family.

It carries out the reaction dTMP + ATP = dTDP + ADP. Functionally, phosphorylation of dTMP to form dTDP in both de novo and salvage pathways of dTTP synthesis. The chain is Thymidylate kinase from Legionella pneumophila (strain Corby).